We begin with the raw amino-acid sequence, 646 residues long: P-selectin (646 aa).

Residues 1-41 form the signal peptide; it reads MASCPKAIWNWRFQRAVFRTVQLLCFSVLIFEVINQKEVSA. Topologically, residues 42–587 are extracellular; it reads WTYHYSNKTY…QAGPLTIQET (546 aa). N-linked (GlcNAc...) asparagine glycosylation is found at Asn-48, Asn-54, and Asn-80. A C-type lectin domain is found at 58-158; the sequence is AFCQKYYTDL…PCWKRKRALC (101 aa). Cystine bridges form between Cys-60/Cys-158, Cys-131/Cys-150, Cys-163/Cys-174, Cys-168/Cys-183, Cys-185/Cys-194, Cys-200/Cys-244, Cys-230/Cys-257, Cys-262/Cys-306, Cys-292/Cys-319, Cys-324/Cys-368, Cys-354/Cys-381, Cys-386/Cys-430, Cys-416/Cys-443, Cys-458/Cys-502, Cys-488/Cys-515, Cys-520/Cys-564, and Cys-550/Cys-577. Residues Glu-121, Asn-123, and Asn-124 each coordinate Ca(2+). Residue Asn-123 participates in a carbohydrate binding. 2 residues coordinate a carbohydrate: Glu-133 and Asn-146. Residues Asn-146 and Asp-147 each coordinate Ca(2+). In terms of domain architecture, EGF-like spans 159–195; the sequence is YRASCQDMSCSKQGECIETIGNYTCSCYPGFYGPECE. A glycan (N-linked (GlcNAc...) asparagine) is linked at Asn-180. Sushi domains are found at residues 198 to 259, 260 to 321, 322 to 383, 384 to 445, 456 to 517, and 518 to 579; these read RECG…QCVA, VQCP…VCKA, LQCQ…ECQA, VTCA…TCEE, VQCP…TCRA, and VKCA…TCQA. Residues Asn-212 and Asn-219 are each glycosylated (N-linked (GlcNAc...) asparagine). A glycan (N-linked (GlcNAc...) asparagine) is linked at Asn-336. N-linked (GlcNAc...) asparagine glycosylation is present at Asn-481. N-linked (GlcNAc...) asparagine glycans are attached at residues Asn-532, Asn-539, and Asn-557. The helical transmembrane segment at 588–611 threads the bilayer; it reads LTYVGGAAAGTTGLVTGSILLALL. Residues 612-646 lie on the Cytoplasmic side of the membrane; that stretch reads RRRCRQKDDGKSPLNPQSHLGTYGVFTNAAFDPSP. Residues 634–637 carry the Endocytosis signal motif; that stretch reads YGVF. Residues 637–646 form an interaction with SNX17 region; sequence FTNAAFDPSP.

It belongs to the selectin/LECAM family. Interacts with SNX17. Interacts with SELPLG/PSGL1 and PODXL2 and mediates neutrophil adhesion and leukocyte rolling. This interaction requires the sialyl-Lewis X epitope of SELPLG and PODXL2, and specific tyrosine sulfation on SELPLG. Interacts (via C-type lectin domain) with alpha-IIb/beta3 integrin ITGA2B:ITGB3 and alpha-V/beta-3 integrin ITGAV:ITGB3. Interacts with alpha5/beta1 integrin ITGA5:ITGB1 and alpha4/beta1 integrin ITGA4:ITGB. Stored in the alpha-granules of platelets and Weibel-Palade bodies of endothelial cells. Upon cell activation by agonists, P-selectin is transported rapidly to the cell surface.

It localises to the cell membrane. Its function is as follows. Ca(2+)-dependent receptor for myeloid cells that binds to carbohydrates on neutrophils and monocytes. Mediates the interaction of activated endothelial cells or platelets with leukocytes. The ligand recognized is sialyl-Lewis X. Mediates rapid rolling of leukocyte rolling over vascular surfaces during the initial steps in inflammation through interaction with SELPLG. Mediates cell-cell interactions and cell adhesion via the interaction with integrin alpha-IIb/beta3 (ITGA2B:ITGB3) and integrin alpha-V/beta-3 (ITGAV:ITGB3). The protein is P-selectin (SELP) of Bos taurus (Bovine).